Reading from the N-terminus, the 226-residue chain is LexA repressor (226 aa).

Residues 28 to 48 constitute a DNA-binding region (H-T-H motif); the sequence is RAEICQSLGFRSPNAAESHLR. Catalysis depends on for autocatalytic cleavage activity residues S133 and K170.

The protein belongs to the peptidase S24 family. In terms of assembly, homodimer.

It catalyses the reaction Hydrolysis of Ala-|-Gly bond in repressor LexA.. Its function is as follows. Represses a number of genes involved in the response to DNA damage (SOS response), including recA and lexA. In the presence of single-stranded DNA, RecA interacts with LexA causing an autocatalytic cleavage which disrupts the DNA-binding part of LexA, leading to derepression of the SOS regulon and eventually DNA repair. This is LexA repressor from Halorhodospira halophila (strain DSM 244 / SL1) (Ectothiorhodospira halophila (strain DSM 244 / SL1)).